Here is a 310-residue protein sequence, read N- to C-terminus: Elongation factor Ts, mitochondrial (310 aa).

The N-terminal 42 residues, 1–42 (MGFQVLRSVIQAPLAKRSFLCKSCPSGLRVLYNNILLSSRSY), are a transit peptide targeting the mitochondrion.

Belongs to the EF-Ts family.

It is found in the mitochondrion. Its function is as follows. Associates with the EF-Tu.GDP complex and induces the exchange of GDP to GTP. It remains bound to the aminoacyl-tRNA.EF-Tu.GTP complex up to the GTP hydrolysis stage on the ribosome. The chain is Elongation factor Ts, mitochondrial (tsf1) from Schizosaccharomyces japonicus (strain yFS275 / FY16936) (Fission yeast).